The following is a 918-amino-acid chain: Sarcosine dehydrogenase, mitochondrial (918 aa).

The span at 1 to 13 (MASLSRALRVAAA) shows a compositional bias: low complexity. The N-terminal 22 residues, 1–22 (MASLSRALRVAAAHPRQSPTRG), are a transit peptide targeting the mitochondrion. The disordered stretch occupies residues 1 to 40 (MASLSRALRVAAAHPRQSPTRGMGPCNLSSAAGPTAEKSV). At Lys-38 the chain carries N6-succinyllysine. His-108 bears the Tele-8alpha-FAD histidine mark. At Lys-173 the chain carries N6-acetyllysine; alternate. Lys-173 carries the post-translational modification N6-succinyllysine; alternate. N6-succinyllysine is present on residues Lys-377 and Lys-391. 2 positions are modified to N6-acetyllysine: Lys-559 and Lys-775. A Phosphotyrosine modification is found at Tyr-777. N6-acetyllysine; alternate occurs at positions 802, 884, and 904. N6-succinyllysine; alternate is present on residues Lys-802, Lys-884, and Lys-904.

The protein belongs to the GcvT family. It depends on FAD as a cofactor. Expressed in pancreas, liver and kidney.

The protein localises to the mitochondrion matrix. It carries out the reaction (6S)-5,6,7,8-tetrahydrofolyl-(gamma-L-Glu)(n) + sarcosine + oxidized [electron-transfer flavoprotein] + H(+) = (6R)-5,10-methylenetetrahydrofolyl-(gamma-L-Glu)(n) + reduced [electron-transfer flavoprotein] + glycine. The protein operates within amine and polyamine degradation; sarcosine degradation; formaldehyde and glycine from sarcosine: step 1/1. Catalyzes the last step of the oxidative degradation of choline to glycine. Converts sarcosine into glycine. This is Sarcosine dehydrogenase, mitochondrial from Homo sapiens (Human).